Consider the following 777-residue polypeptide: MRNHRTSIFVVLSLVIILNGQSGFLPRAGAESKVHIVYLGEKQHDDPEFVTESHHRMLWSLLGSKEEAHGSMVHSFRHGFSGFAAKLTESQAKKIADLPEVVHVIPDRFYKPATTRTWDYLGLSPTNPKNLLNQTNMGEQMIIGIIDSGVWPESEVFNDNEIGPVPSHWKGGCESGEDFNSSHCNKKLIGAKYFINAFLATHESFNSSESLDFISPRGYNGHGTHVATIAGGSYVPNTSYKGLAGGTVRGGAPRARIAVYKTCWYLDLDIAACSSADILKAMDEAIHDGVDVLSLSLGFEPLYPETDVRDGIATGAFHAVLKGITVVCAAGNAGPAAQTVGNTAPWILTVAATTLDRSFVTPMTLGNNKVILGQAIYTGTEVGFTSLVYPENPGNSNESFSGTCERLLINSNRTMAGKVVLCFTESPYSISVTRAAHYVKRAGGLGVIIAGQPGNVLRPCLDDFPCVAVDYELGTYILFYIRSNGSPVVKIQPSRTLIGQPVGTKVASFSSRGPNPISAAILKPDIAAPGVSILAATTTNTTFNDRGFIFLSGTSMATPTISGIVALLKALHPDWSPAAIRSAIVTTAWRTDPFGEQIFAEGSPRKPADPFDYGGGLVNPEKATKPGLVYDLGLEDYVLYMCSVGYNETSISQLVGKGTVCSYPKPSVLDFNLPSITIPNLKEEVTLPRTLTNVGPLESVYRVAVEPPLGTQVTVTPETLVFNSTTKRVSFKVSVSTTHKINTGYYFGSLTWSDSLHNVTIPLSVRTQLLPYYYDEN.

Positions 1–22 (MRNHRTSIFVVLSLVIILNGQS) are cleaved as a signal peptide. The propeptide at 23–113 (GFLPRAGAES…VIPDRFYKPA (91 aa)) is activation peptide. The Inhibitor I9 domain maps to 34–111 (VHIVYLGEKQ…VHVIPDRFYK (78 aa)). One can recognise a Peptidase S8 domain in the interval 117–624 (TWDYLGLSPT…GGLVNPEKAT (508 aa)). Asparagine 133 carries an N-linked (GlcNAc...) asparagine glycan. Aspartate 147 serves as the catalytic Charge relay system. N-linked (GlcNAc...) asparagine glycans are attached at residues asparagine 180 and asparagine 206. The active-site Charge relay system is histidine 222. N-linked (GlcNAc...) asparagine glycosylation is found at asparagine 237, asparagine 397, asparagine 412, and asparagine 540. Residues 386–481 (SLVYPENPGN…ELGTYILFYI (96 aa)) form the PA domain. Serine 555 functions as the Charge relay system in the catalytic mechanism. 3 N-linked (GlcNAc...) asparagine glycosylation sites follow: asparagine 647, asparagine 723, and asparagine 758.

This sequence belongs to the peptidase S8 family.

It is found in the secreted. This chain is Subtilisin-like protease SBT3.7, found in Arabidopsis thaliana (Mouse-ear cress).